We begin with the raw amino-acid sequence, 365 residues long: 3-dehydroquinate synthase (365 aa).

NAD(+) contacts are provided by residues 106–110 (GVIGD), 130–131 (TT), lysine 142, lysine 151, and 169–172 (FFAT). 3 residues coordinate Zn(2+): glutamate 184, histidine 247, and histidine 264.

The protein belongs to the sugar phosphate cyclases superfamily. Dehydroquinate synthase family. NAD(+) serves as cofactor. It depends on Co(2+) as a cofactor. Requires Zn(2+) as cofactor.

It is found in the cytoplasm. It carries out the reaction 7-phospho-2-dehydro-3-deoxy-D-arabino-heptonate = 3-dehydroquinate + phosphate. It functions in the pathway metabolic intermediate biosynthesis; chorismate biosynthesis; chorismate from D-erythrose 4-phosphate and phosphoenolpyruvate: step 2/7. Catalyzes the conversion of 3-deoxy-D-arabino-heptulosonate 7-phosphate (DAHP) to dehydroquinate (DHQ). In Listeria monocytogenes serotype 4b (strain F2365), this protein is 3-dehydroquinate synthase.